A 251-amino-acid polypeptide reads, in one-letter code: Triosephosphate isomerase (251 aa).

Residues Asn-10 and Lys-12 each contribute to the substrate site. Catalysis depends on His-95, which acts as the Electrophile. Glu-167 acts as the Proton acceptor in catalysis.

It belongs to the triosephosphate isomerase family. In terms of assembly, homodimer.

The catalysed reaction is D-glyceraldehyde 3-phosphate = dihydroxyacetone phosphate. Its pathway is carbohydrate biosynthesis; gluconeogenesis. The protein operates within carbohydrate degradation; glycolysis; D-glyceraldehyde 3-phosphate from glycerone phosphate: step 1/1. The chain is Triosephosphate isomerase (TPI) from Coprinopsis cinerea (strain Okayama-7 / 130 / ATCC MYA-4618 / FGSC 9003) (Inky cap fungus).